The chain runs to 317 residues: tRNA dimethylallyltransferase (317 aa).

Position 14–21 (G14–T21) interacts with ATP. T16–T21 is a substrate binding site. The interval D39–Q42 is interaction with substrate tRNA.

It belongs to the IPP transferase family. Monomer. Mg(2+) serves as cofactor.

The enzyme catalyses adenosine(37) in tRNA + dimethylallyl diphosphate = N(6)-dimethylallyladenosine(37) in tRNA + diphosphate. Its function is as follows. Catalyzes the transfer of a dimethylallyl group onto the adenine at position 37 in tRNAs that read codons beginning with uridine, leading to the formation of N6-(dimethylallyl)adenosine (i(6)A). The chain is tRNA dimethylallyltransferase from Bacillus cereus (strain AH820).